The primary structure comprises 342 residues: Ribosomal RNA small subunit methyltransferase C (342 aa).

Belongs to the methyltransferase superfamily. RsmC family. Monomer.

It is found in the cytoplasm. It carries out the reaction guanosine(1207) in 16S rRNA + S-adenosyl-L-methionine = N(2)-methylguanosine(1207) in 16S rRNA + S-adenosyl-L-homocysteine + H(+). Its function is as follows. Specifically methylates the guanine in position 1207 of 16S rRNA in the 30S particle. The chain is Ribosomal RNA small subunit methyltransferase C from Enterobacter sp. (strain 638).